We begin with the raw amino-acid sequence, 236 residues long: Adenosine 5'-phosphosulfate reductase (236 aa).

C122, C123, C205, and C208 together coordinate [4Fe-4S] cluster. C231 functions as the Nucleophile; cysteine thiosulfonate intermediate in the catalytic mechanism.

Belongs to the PAPS reductase family. CysH subfamily. The cofactor is [4Fe-4S] cluster.

It is found in the cytoplasm. The enzyme catalyses [thioredoxin]-disulfide + sulfite + AMP + 2 H(+) = adenosine 5'-phosphosulfate + [thioredoxin]-dithiol. The protein operates within sulfur metabolism; hydrogen sulfide biosynthesis; sulfite from sulfate. Its function is as follows. Catalyzes the formation of sulfite from adenosine 5'-phosphosulfate (APS) using thioredoxin as an electron donor. The sequence is that of Adenosine 5'-phosphosulfate reductase from Mycolicibacterium smegmatis (strain ATCC 700084 / mc(2)155) (Mycobacterium smegmatis).